The following is a 157-amino-acid chain: Transcriptional repressor NrdR (157 aa).

The segment at 3 to 34 is a zinc-finger region; the sequence is CPFCGFADTRVIDSRLGKEGNNIRRRRECSQC. In terms of domain architecture, ATP-cone spans 49–139; it reads PLIIKKDARR…VYRQFKDINE (91 aa).

It belongs to the NrdR family. Zn(2+) is required as a cofactor.

Functionally, negatively regulates transcription of bacterial ribonucleotide reductase nrd genes and operons by binding to NrdR-boxes. This chain is Transcriptional repressor NrdR, found in Syntrophotalea carbinolica (strain DSM 2380 / NBRC 103641 / GraBd1) (Pelobacter carbinolicus).